A 328-amino-acid chain; its full sequence is MNNSAFTFQTLHPDTIMDALFKQGIRVDSGLTPLNSYENRVYQFQDEERRRFVVKFYRPERWTADQILEEHQFALQLVNDEVPVAAPVAFNGQTLLNHQGFYFAVFPSVGGRQFEADNIDQMEAVGRYLGRMHQTGRKQLFIHRPTIGLNEYLIEPRKLFEDATLIPSGLKAAFLKATDELIAAVTAHWREDFTVLRLHGDCHAGNILWRDGPMFVDLDDARNGPAIQDLWMLLNGDKAQQRMQLETIIEAYEEFSEFDTAEIGLIEPLRAMRLVYYLAWLMRHWADPAFPKNFPWLTGEDYWLRQTATFIEQAKVLQEPPLQLTPMY.

Aspartate 201 (proton acceptor) is an active-site residue. Residues asparagine 206 and aspartate 217 each coordinate Mg(2+). Residue aspartate 217 is part of the active site.

The protein belongs to the SrkA/RdoA protein kinase family. Monomer. It depends on Mg(2+) as a cofactor.

It localises to the cytoplasm. It catalyses the reaction L-seryl-[protein] + ATP = O-phospho-L-seryl-[protein] + ADP + H(+). It carries out the reaction L-threonyl-[protein] + ATP = O-phospho-L-threonyl-[protein] + ADP + H(+). A protein kinase that phosphorylates Ser and Thr residues. Probably acts to suppress the effects of stress linked to accumulation of reactive oxygen species. Probably involved in the extracytoplasmic stress response. Also has a role in LPS synthesis, through regulation of the galETK expression. Its function is as follows. A protein kinase that phosphorylates Ser and Thr residues. Probably acts to suppress the effects of stress linked to accumulation of reactive oxygen species. Probably involved in the extracytoplasmic stress response. In Shigella flexneri, this protein is Stress response kinase A.